The chain runs to 107 residues: Ribonuclease P protein component 4 (107 aa).

Cys62, Cys65, Cys87, and Cys90 together coordinate Zn(2+).

It belongs to the eukaryotic/archaeal RNase P protein component 4 family. In terms of assembly, consists of a catalytic RNA component and at least 4-5 protein subunits. The cofactor is Zn(2+).

Its subcellular location is the cytoplasm. It carries out the reaction Endonucleolytic cleavage of RNA, removing 5'-extranucleotides from tRNA precursor.. Its function is as follows. Part of ribonuclease P, a protein complex that generates mature tRNA molecules by cleaving their 5'-ends. The sequence is that of Ribonuclease P protein component 4 from Archaeoglobus fulgidus (strain ATCC 49558 / DSM 4304 / JCM 9628 / NBRC 100126 / VC-16).